The sequence spans 326 residues: Beta-ketoacyl-[acyl-carrier-protein] synthase III (326 aa).

Catalysis depends on residues Cys-111 and His-253. The ACP-binding stretch occupies residues 254–258 (QANSR). Asn-283 is a catalytic residue.

The protein belongs to the thiolase-like superfamily. FabH family. In terms of assembly, homodimer.

It is found in the cytoplasm. It catalyses the reaction malonyl-[ACP] + acetyl-CoA + H(+) = 3-oxobutanoyl-[ACP] + CO2 + CoA. It participates in lipid metabolism; fatty acid biosynthesis. Functionally, catalyzes the condensation reaction of fatty acid synthesis by the addition to an acyl acceptor of two carbons from malonyl-ACP. Catalyzes the first condensation reaction which initiates fatty acid synthesis and may therefore play a role in governing the total rate of fatty acid production. Possesses both acetoacetyl-ACP synthase and acetyl transacylase activities. Its substrate specificity determines the biosynthesis of branched-chain and/or straight-chain of fatty acids. This chain is Beta-ketoacyl-[acyl-carrier-protein] synthase III, found in Latilactobacillus sakei subsp. sakei (strain 23K) (Lactobacillus sakei subsp. sakei).